Here is a 358-residue protein sequence, read N- to C-terminus: 4-hydroxy-3-methylbut-2-en-1-yl diphosphate synthase (flavodoxin) (358 aa).

Positions 264, 267, 299, and 306 each coordinate [4Fe-4S] cluster.

It belongs to the IspG family. The cofactor is [4Fe-4S] cluster.

It catalyses the reaction (2E)-4-hydroxy-3-methylbut-2-enyl diphosphate + oxidized [flavodoxin] + H2O + 2 H(+) = 2-C-methyl-D-erythritol 2,4-cyclic diphosphate + reduced [flavodoxin]. Its pathway is isoprenoid biosynthesis; isopentenyl diphosphate biosynthesis via DXP pathway; isopentenyl diphosphate from 1-deoxy-D-xylulose 5-phosphate: step 5/6. Its function is as follows. Converts 2C-methyl-D-erythritol 2,4-cyclodiphosphate (ME-2,4cPP) into 1-hydroxy-2-methyl-2-(E)-butenyl 4-diphosphate. The polypeptide is 4-hydroxy-3-methylbut-2-en-1-yl diphosphate synthase (flavodoxin) (Helicobacter acinonychis (strain Sheeba)).